The chain runs to 621 residues: 1-deoxy-D-xylulose-5-phosphate synthase (621 aa).

Residues H80 and 121 to 123 (GHS) each bind thiamine diphosphate. Residue D152 participates in Mg(2+) binding. Residues 153-154 (GA), N181, Y288, and E370 contribute to the thiamine diphosphate site. A Mg(2+)-binding site is contributed by N181.

The protein belongs to the transketolase family. DXPS subfamily. In terms of assembly, homodimer. Mg(2+) is required as a cofactor. It depends on thiamine diphosphate as a cofactor.

It catalyses the reaction D-glyceraldehyde 3-phosphate + pyruvate + H(+) = 1-deoxy-D-xylulose 5-phosphate + CO2. Its pathway is metabolic intermediate biosynthesis; 1-deoxy-D-xylulose 5-phosphate biosynthesis; 1-deoxy-D-xylulose 5-phosphate from D-glyceraldehyde 3-phosphate and pyruvate: step 1/1. Catalyzes the acyloin condensation reaction between C atoms 2 and 3 of pyruvate and glyceraldehyde 3-phosphate to yield 1-deoxy-D-xylulose-5-phosphate (DXP). The polypeptide is 1-deoxy-D-xylulose-5-phosphate synthase (Erwinia tasmaniensis (strain DSM 17950 / CFBP 7177 / CIP 109463 / NCPPB 4357 / Et1/99)).